A 315-amino-acid polypeptide reads, in one-letter code: MIASFYAFLDYLKNMKAASPHTLRNYSIDLSSLKCFLEKKGELTPTPPLSLQEDSRSSSQLSFSLFTKENIRLYLLEQIQTTHSKRTVRRRLSAIKSFAKFCVKNQWIPENPAEMIRGPRLPKELPSPLTYEQVLALMSAPDLDKVTGFRDRCLLELFYSSGLRISEITALNRSDIDFQSNLLRICGKGKKERIVPMTKVAVQWLQAYLDHPDRAAVEQDHQACFLNRFGKRLSTRSIDRKFQQYLLKTGLSGTITPHTIRHTIATHWLERGMDLKTIQLLLGHTSLETTTIYTHVSMKLKKQIHDEAHPHNLED.

The 103-residue stretch at 1–103 (MIASFYAFLD…AIKSFAKFCV (103 aa)) folds into the Core-binding (CB) domain. One can recognise a Tyr recombinase domain in the interval 124–306 (ELPSPLTYEQ…SMKLKKQIHD (183 aa)). Active-site residues include R164, K188, H258, R261, and H284. Y293 functions as the O-(3'-phospho-DNA)-tyrosine intermediate in the catalytic mechanism.

Belongs to the 'phage' integrase family. XerC subfamily. As to quaternary structure, forms a cyclic heterotetrameric complex composed of two molecules of XerC and two molecules of XerD.

It is found in the cytoplasm. Its function is as follows. Site-specific tyrosine recombinase, which acts by catalyzing the cutting and rejoining of the recombining DNA molecules. The XerC-XerD complex is essential to convert dimers of the bacterial chromosome into monomers to permit their segregation at cell division. It also contributes to the segregational stability of plasmids. In Chlamydia muridarum (strain MoPn / Nigg), this protein is Tyrosine recombinase XerC.